The chain runs to 378 residues: Schlafen family member 2 (378 aa).

This sequence belongs to the Schlafen family. In terms of tissue distribution, mainly expressed in the thymus, lymph node and spleen.

It localises to the cytoplasm. Its function is as follows. tRNA-binding protein involved in T-cell mediated immunity. Plays a key role during the metabolic reprograming phase of activated T-cell, when T-cells produce reactive oxygen species (ROS): acts by binding tRNAs and protecting them from cleavage by the oxidative stress-activated ribonuclease angiogenin (ANG). Also required for T-cell quiescence maintenance. The sequence is that of Schlafen family member 2 from Mus musculus (Mouse).